Here is a 438-residue protein sequence, read N- to C-terminus: Putative pectate lyase 14 (438 aa).

Positions 1-26 are cleaved as a signal peptide; it reads MVVARTLFSISATLIIFLALFLHVNA. N-linked (GlcNAc...) asparagine glycosylation is found at asparagine 40, asparagine 46, and asparagine 73. Positions 236, 260, and 264 each coordinate Ca(2+). The active site involves arginine 316.

The protein belongs to the polysaccharide lyase 1 family. The cofactor is Ca(2+).

The enzyme catalyses Eliminative cleavage of (1-&gt;4)-alpha-D-galacturonan to give oligosaccharides with 4-deoxy-alpha-D-galact-4-enuronosyl groups at their non-reducing ends.. It participates in glycan metabolism; pectin degradation; 2-dehydro-3-deoxy-D-gluconate from pectin: step 2/5. This is Putative pectate lyase 14 from Arabidopsis thaliana (Mouse-ear cress).